A 1278-amino-acid polypeptide reads, in one-letter code: Mediator of RNA polymerase II transcription subunit 16 (1278 aa).

Positions 1–10 (MNQQNPEEEV) are enriched in acidic residues. 3 disordered regions span residues 1-21 (MNQQNPEEEVSLVNNSGGGGI), 530-557 (TKDFKNHQVAAAGPSVDAPKEPDSGDEK), and 839-861 (SAGTGSNRNNVTSPTQNASSPAT). The span at 547 to 557 (APKEPDSGDEK) shows a compositional bias: basic and acidic residues. A compositionally biased stretch (polar residues) spans 841-861 (GTGSNRNNVTSPTQNASSPAT).

It belongs to the plant Mediator complex subunit 16 family. In terms of assembly, component of the Mediator complex.

The protein localises to the nucleus. In terms of biological role, component of the Mediator complex, a coactivator involved in the regulated transcription of nearly all RNA polymerase II-dependent genes. Mediator functions as a bridge to convey information from gene-specific regulatory proteins to the basal RNA polymerase II transcription machinery. The Mediator complex, having a compact conformation in its free form, is recruited to promoters by direct interactions with regulatory proteins and serves for the assembly of a functional preinitiation complex with RNA polymerase II and the general transcription factors. Involved in the regulation of the circadian clock, in the control of flowering time, in freezing- and osmotic-stress tolerance and in both salicylic acid- and jasmonate-mediated defense gene expression. This Arabidopsis thaliana (Mouse-ear cress) protein is Mediator of RNA polymerase II transcription subunit 16 (MED16).